Reading from the N-terminus, the 443-residue chain is Threonine/serine transporter TdcC (443 aa).

Transmembrane regions (helical) follow at residues 24–44 (WVLG…PISA), 45–65 (GIGG…IAFF), 95–115 (VGGV…LWIY), 140–160 (VVAL…KDLM), 163–183 (VMGY…LSLI), 207–227 (ILVT…FSPI), 259–279 (ASVL…FTLS), 319–339 (ASII…LGTL), 363–383 (LNMI…YINP), 385–405 (ILDL…CLLP), and 423–443 (SNYF…YQLM).

The protein belongs to the amino acid/polyamine transporter 2 family. SdaC/TdcC subfamily.

The protein localises to the cell inner membrane. The enzyme catalyses L-threonine(in) + H(+)(in) = L-threonine(out) + H(+)(out). It carries out the reaction L-serine(in) + H(+)(in) = L-serine(out) + H(+)(out). In terms of biological role, involved in the import of threonine and serine into the cell, with the concomitant import of a proton (symport system). The polypeptide is Threonine/serine transporter TdcC (Edwardsiella tarda).